Reading from the N-terminus, the 474-residue chain is PRAME family member 2 (474 aa).

The LRR 1; degenerate repeat unit spans residues 97–124 (RWKLQVLDLRDVDENFWARWPGAWALSC). An LRR 2; degenerate repeat occupies 179–203 (HLCCSKLVNYLTPIKYLRKSLKIIY). One copy of the LRR 3; degenerate repeat lies at 204-230 (INSIGELEIHNTCWPHLIRKLYCYLKE). An LRR 4; degenerate repeat occupies 231-265 (MKTLCKLVFSRCHHYTSDNELEGWLVTRFTSVFLR). 5 LRR repeats span residues 266–291 (LEHL…IRCL), 292–323 (QNPL…GYLK), 324–342 (HLNL…PLGA), 348–375 (AASL…GLSC), and 376–400 (CSQL…LLRH).

It belongs to the PRAME family.

The protein is PRAME family member 2 of Homo sapiens (Human).